Reading from the N-terminus, the 532-residue chain is MADRPIRQALLSVSDKTGIVEFAQGLVKRGVKLLSTGGTAKLLAQNALPVIEVSDYTGFPEMMDGRVKTLHPKVHGGILGRRGTDDAIMQQHGIEGIDMVVVNLYPFAATVAKPDCTLADAVENIDIGGPTMVRSAAKNHKDVAIVVNNHDFNAILAEMDQHQNSLTFETRFDLAIKAFEHTAQYDSMIANYFGQLVKPYHIAEEEEANAKCGQFPRTLNLNFVRKQAMRYGENSHQNAAFYVDLNVKEASVATANQLQGKALSYNNIADTDAALECVKEFDDPACVIVKHANPCGVALGKDILDAYNRAYQTDPTSAFGGIIAFNRELDEKTANEIVERQFVEVIIAPKVSAEAQEVMKRKKNVRLLECGEWTSRSERLDFKRVNGGLLVQDADLGMVGVDDLKVVSKRQPTEQELKDLLFCWKVAKFVKSNAIVYAKDNQTIGIGAGQMSRVYSAKIAGIKAQDEGLEVAGCVMASDAFFPFRDGIDAAAKVGIQCVIHPGGSMRDQEVIDAADEHNMVMVLTGMRHFRH.

The MGS-like domain occupies 1 to 147 (MADRPIRQAL…KNHKDVAIVV (147 aa)).

It belongs to the PurH family.

The catalysed reaction is (6R)-10-formyltetrahydrofolate + 5-amino-1-(5-phospho-beta-D-ribosyl)imidazole-4-carboxamide = 5-formamido-1-(5-phospho-D-ribosyl)imidazole-4-carboxamide + (6S)-5,6,7,8-tetrahydrofolate. It catalyses the reaction IMP + H2O = 5-formamido-1-(5-phospho-D-ribosyl)imidazole-4-carboxamide. The protein operates within purine metabolism; IMP biosynthesis via de novo pathway; 5-formamido-1-(5-phospho-D-ribosyl)imidazole-4-carboxamide from 5-amino-1-(5-phospho-D-ribosyl)imidazole-4-carboxamide (10-formyl THF route): step 1/1. It functions in the pathway purine metabolism; IMP biosynthesis via de novo pathway; IMP from 5-formamido-1-(5-phospho-D-ribosyl)imidazole-4-carboxamide: step 1/1. The polypeptide is Bifunctional purine biosynthesis protein PurH (Haemophilus influenzae (strain ATCC 51907 / DSM 11121 / KW20 / Rd)).